Reading from the N-terminus, the 609-residue chain is Pentatricopeptide repeat-containing protein At5g13770, chloroplastic (609 aa).

The N-terminal 44 residues, 1–44 (MAIASGSWVATVNHHANPHSFTSPTKPIFFLSQKPHNFHVCSSR), are a transit peptide targeting the chloroplast. PPR repeat units lie at residues 103–137 (ELRTTKHLISYLVSSKSWDLLVSVCEDLREHKALP), 138–168 (DGQTCSNLIRSCIRDRKFRITHCLLSVFRSD), 172–207 (AVSASDAAMKGFNKLQMYSSTIQVFDRLKQSVGVEP), 208–242 (SPGCYCRIMEAHEKIGENHKVVELFQEFKSQRLSF), 247–281 (SGSIYTIVCSSLAKSGRAFEALEVLEEMKDKGIPE), 282–316 (SSELYSMLIRAFAEAREVVITEKLFKEAGGKKLLK), 317–351 (DPEMCLKVVLMYVREGNMETTLEVVAAMRKAELKV), 352–386 (TDCILCAIVNGFSKQRGFAEAVKVYEWAMKEECEA), 387–421 (GQVTYAIAINAYCRLEKYNKAEMLFDEMVKKGFDK), 422–456 (CVVAYSNIMDMYGKTRRLSDAVRLMAKMKQRGCKP), 457–491 (NIWIYNSLIDMHGRAMDLRRAEKIWKEMKRAKVLP), 492–526 (DKVSYTSMISAYNRSKELERCVELYQEFRMNRGKI), and 527–561 (DRAMAGIMVGVFSKTSRIDELMRLLQDMKVEGTRL).

This sequence belongs to the PPR family. P subfamily.

Its subcellular location is the plastid. It is found in the chloroplast. This is Pentatricopeptide repeat-containing protein At5g13770, chloroplastic from Arabidopsis thaliana (Mouse-ear cress).